Here is a 130-residue protein sequence, read N- to C-terminus: Large ribosomal subunit protein bL12 (130 aa).

This sequence belongs to the bacterial ribosomal protein bL12 family. In terms of assembly, homodimer. Part of the ribosomal stalk of the 50S ribosomal subunit. Forms a multimeric L10(L12)X complex, where L10 forms an elongated spine to which 2 to 4 L12 dimers bind in a sequential fashion. Binds GTP-bound translation factors.

Forms part of the ribosomal stalk which helps the ribosome interact with GTP-bound translation factors. Is thus essential for accurate translation. This chain is Large ribosomal subunit protein bL12, found in Mycolicibacterium gilvum (strain PYR-GCK) (Mycobacterium gilvum (strain PYR-GCK)).